The following is a 37-amino-acid chain: Albumin-2 (37 aa).

A Hemopexin repeat occupies 6-37 (IANFSVLNXEAYLFINDKYVLLDYAPGTXNDK).

Dimer. Expressed in seeds (at protein level).

The protein localises to the cytoplasm. The protein resides in the cytosol. Its function is as follows. Binds hemin and thiamine. This Lens culinaris (Lentil) protein is Albumin-2.